The following is a 394-amino-acid chain: LL-diaminopimelate aminotransferase (394 aa).

Substrate is bound by residues Tyr14 and Gly41. Pyridoxal 5'-phosphate-binding positions include Tyr71, 104–105, Tyr128, Asn174, Tyr205, and 233–235; these read AK and SFS. Lys105, Tyr128, and Asn174 together coordinate substrate. Lys236 bears the N6-(pyridoxal phosphate)lysine mark. Residues Arg244 and Asn275 each coordinate pyridoxal 5'-phosphate. Substrate contacts are provided by Asn275 and Arg369.

It belongs to the class-I pyridoxal-phosphate-dependent aminotransferase family. LL-diaminopimelate aminotransferase subfamily. As to quaternary structure, homodimer. Pyridoxal 5'-phosphate serves as cofactor.

The enzyme catalyses (2S,6S)-2,6-diaminopimelate + 2-oxoglutarate = (S)-2,3,4,5-tetrahydrodipicolinate + L-glutamate + H2O + H(+). Its pathway is amino-acid biosynthesis; L-lysine biosynthesis via DAP pathway; LL-2,6-diaminopimelate from (S)-tetrahydrodipicolinate (aminotransferase route): step 1/1. Involved in the synthesis of meso-diaminopimelate (m-DAP or DL-DAP), required for both lysine and peptidoglycan biosynthesis. Catalyzes the direct conversion of tetrahydrodipicolinate to LL-diaminopimelate. This chain is LL-diaminopimelate aminotransferase, found in Chlamydia trachomatis serovar L2b (strain UCH-1/proctitis).